The primary structure comprises 99 residues: Ubiquitin-related modifier 1 homolog (99 aa).

Position 99 is a 1-thioglycine (Gly-99). Residue Gly-99 forms a Glycyl lysine isopeptide (Gly-Lys) (interchain with K-? in acceptor proteins) linkage.

It belongs to the URM1 family. Interacts with cer. In terms of processing, C-terminal thiocarboxylation occurs in 2 steps, it is first acyl-adenylated (-COAMP) via the hesA/moeB/thiF part of the MOCS3 homolog, then thiocarboxylated (-COSH) via the rhodanese domain of the MOCS3 homolog.

The protein resides in the cytoplasm. It participates in tRNA modification; 5-methoxycarbonylmethyl-2-thiouridine-tRNA biosynthesis. Its function is as follows. Acts as a sulfur carrier required for 2-thiolation of mcm(5)S(2)U at tRNA wobble positions of cytosolic tRNA(Lys), tRNA(Glu) and tRNA(Gln). Serves as sulfur donor in tRNA 2-thiolation reaction by being thiocarboxylated (-COSH) at its C-terminus by MOCS3. The sulfur is then transferred to tRNA to form 2-thiolation of mcm(5)S(2)U. Also acts as a ubiquitin-like protein (UBL) that is covalently conjugated via an isopeptide bond to lysine residues of target proteins such as Prx2/Jafrac1, Ciao1, Eip71CD and GILT1. The thiocarboxylated form serves as substrate for conjugation and oxidative stress specifically induces the formation of UBL-protein conjugates. This chain is Ubiquitin-related modifier 1 homolog, found in Drosophila persimilis (Fruit fly).